The sequence spans 408 residues: NFATC2-interacting protein (408 aa).

The interval 1 to 113 (MAEPVGKRGR…LDPGEAPLVP (113 aa)) is disordered. A compositionally biased stretch (low complexity) spans 24-40 (QRSPSRGTLDVVSVDLV). Phosphoserine is present on residues S41, S43, S73, S77, S79, S81, and S116. Residues K118 and K120 each participate in a glycyl lysine isopeptide (Lys-Gly) (interchain with G-Cter in SUMO2) cross-link. The disordered stretch occupies residues 141–205 (EEEVELADSS…TKSRKHTRAL (65 aa)). Basic and acidic residues predominate over residues 169–181 (RTKDKEEKKKTEI). A phosphoserine mark is found at S187, S190, and S193. Residues 196 to 205 (TKSRKHTRAL) show a composition bias toward basic residues. Residues 197–220 (KSRKHTRALKKLSEVNKRLQDLRS) adopt a coiled-coil conformation. Residues S209 and S303 each carry the phosphoserine modification. T305 and T307 each carry phosphothreonine. The Ubiquitin-like domain occupies 337–408 (LQLRVQGKEK…ESGDLIEVWG (72 aa)). Phosphoserine occurs at positions 358 and 379.

As to quaternary structure, interacts with NFATC2, TRAF1, TRAF2 and PRMT1. Interacts with UBE2I/UBC9. Post-translationally, methylation at the N-terminus by PRMT1 modulates interaction with the NFAT complex and results in augmented cytokine production.

Its subcellular location is the nucleus. The protein localises to the cytoplasm. In T-helper 2 (Th2) cells, regulates the magnitude of NFAT-driven transcription of a specific subset of cytokine genes, including IL3, IL4, IL5 and IL13, but not IL2. Recruits PRMT1 to the IL4 promoter; this leads to enhancement of histone H4 'Arg-3'-methylation and facilitates subsequent histone acetylation at the IL4 locus, thus promotes robust cytokine expression. Down-regulates formation of poly-SUMO chains by UBE2I/UBC9. This Macaca fascicularis (Crab-eating macaque) protein is NFATC2-interacting protein (NFATC2IP).